The sequence spans 322 residues: Methionyl-tRNA formyltransferase (322 aa).

113-116 is a (6S)-5,6,7,8-tetrahydrofolate binding site; sequence SLLP.

It belongs to the Fmt family.

The enzyme catalyses L-methionyl-tRNA(fMet) + (6R)-10-formyltetrahydrofolate = N-formyl-L-methionyl-tRNA(fMet) + (6S)-5,6,7,8-tetrahydrofolate + H(+). Its function is as follows. Attaches a formyl group to the free amino group of methionyl-tRNA(fMet). The formyl group appears to play a dual role in the initiator identity of N-formylmethionyl-tRNA by promoting its recognition by IF2 and preventing the misappropriation of this tRNA by the elongation apparatus. The polypeptide is Methionyl-tRNA formyltransferase (Bacteroides thetaiotaomicron (strain ATCC 29148 / DSM 2079 / JCM 5827 / CCUG 10774 / NCTC 10582 / VPI-5482 / E50)).